A 249-amino-acid polypeptide reads, in one-letter code: tRNA pseudouridine synthase A (249 aa).

Asp52 functions as the Nucleophile in the catalytic mechanism. Substrate is bound at residue Tyr111.

This sequence belongs to the tRNA pseudouridine synthase TruA family. As to quaternary structure, homodimer.

The catalysed reaction is uridine(38/39/40) in tRNA = pseudouridine(38/39/40) in tRNA. Functionally, formation of pseudouridine at positions 38, 39 and 40 in the anticodon stem and loop of transfer RNAs. This is tRNA pseudouridine synthase A from Caulobacter sp. (strain K31).